Consider the following 208-residue polypeptide: Uracil phosphoribosyltransferase (208 aa).

Residues R78, R103, and 130–138 contribute to the 5-phospho-alpha-D-ribose 1-diphosphate site; that span reads DPMLATGGS. Uracil-binding positions include I193 and 198–200; that span reads GDA. 5-phospho-alpha-D-ribose 1-diphosphate is bound at residue D199.

It belongs to the UPRTase family. It depends on Mg(2+) as a cofactor.

The catalysed reaction is UMP + diphosphate = 5-phospho-alpha-D-ribose 1-diphosphate + uracil. It functions in the pathway pyrimidine metabolism; UMP biosynthesis via salvage pathway; UMP from uracil: step 1/1. Its activity is regulated as follows. Allosterically activated by GTP. Functionally, catalyzes the conversion of uracil and 5-phospho-alpha-D-ribose 1-diphosphate (PRPP) to UMP and diphosphate. The protein is Uracil phosphoribosyltransferase of Yersinia pestis.